The following is a 116-amino-acid chain: Protein BIC2 (116 aa).

Disordered regions lie at residues 1 to 33 (MKNTNLPEETKEPISPGSSHRKQNKTGTKTCFP) and 95 to 116 (DSGDDAGARGSRPQRLRVESSC).

Its subcellular location is the nucleus. Functionally, regulates the blue-light dependent dimerization of CRY2 and formation of photobodies. Inhibits CRY phosphorylation. The protein is Protein BIC2 of Arabidopsis thaliana (Mouse-ear cress).